The following is a 622-amino-acid chain: Pentatricopeptide repeat-containing protein At5g06540 (622 aa).

PPR repeat units follow at residues 81–115, 116–150, 151–181, 182–212, 213–247, 248–282, 283–313, 314–348, 349–384, and 385–419; these read NLFV…RIWP, DNIT…GFQN, DVYV…MGFR, DVVS…MPHR, NLFT…GVVA, NETV…HMTV, NLIL…LPET, DSLS…GFIP, RDVT…GIEP, and RLEH…PNAP. Residues 420 to 495 form a type E motif region; it reads ILGALLGACK…PPGWSLIEID (76 aa). Residues 496–527 form a type E(+) motif region; the sequence is GKINKFTMGDDQKHPEMGKIRRKWEEILGKIR. A type DYW motif region spans residues 528–622; the sequence is LIGYKGNTGD…NGVCSCRDYW (95 aa).

It belongs to the PPR family. PCMP-H subfamily.

The polypeptide is Pentatricopeptide repeat-containing protein At5g06540 (PCMP-H88) (Arabidopsis thaliana (Mouse-ear cress)).